Here is a 665-residue protein sequence, read N- to C-terminus: Intraflagellar transport protein 70A (665 aa).

7 TPR repeats span residues 11-44, 45-78, 154-187, 189-221, 393-424, 425-457, and 459-492; these read DGEF…SPRS, RAGL…HPEL, TDGQ…SGYQ, DLSY…GIRQ, LTKQ…EKYI, PVLM…CNDH, and VWKL…HYDN. A coiled-coil region spans residues 508–535; sequence YIMTSQNEEAEELMRKIEKEEEQLSYDD. The TPR 8 repeat unit spans residues 544 to 577; the sequence is CIVNLVIGTLYCAKGNYEFGISRVIKSLEPYNKK.

It belongs to the TTC30/dfy-1/fleer family.

It localises to the cell projection. It is found in the cilium. Its function is as follows. Required for polyglutamylation of axonemal tubulin. Plays a role in anterograde intraflagellar transport (IFT), the process by which cilia precursors are transported from the base of the cilium to the site of their incorporation at the tip. The polypeptide is Intraflagellar transport protein 70A (Homo sapiens (Human)).